The sequence spans 372 residues: Cobalt-precorrin-5B C(1)-methyltransferase (372 aa).

It belongs to the CbiD family.

It catalyses the reaction Co-precorrin-5B + S-adenosyl-L-methionine = Co-precorrin-6A + S-adenosyl-L-homocysteine. Its pathway is cofactor biosynthesis; adenosylcobalamin biosynthesis; cob(II)yrinate a,c-diamide from sirohydrochlorin (anaerobic route): step 6/10. Catalyzes the methylation of C-1 in cobalt-precorrin-5B to form cobalt-precorrin-6A. The polypeptide is Cobalt-precorrin-5B C(1)-methyltransferase (Prochlorococcus marinus (strain MIT 9515)).